The chain runs to 147 residues: 3-dehydroquinate dehydratase (147 aa).

The active-site Proton acceptor is the Tyr22. 3 residues coordinate substrate: Asn76, His82, and Asp89. The active-site Proton donor is the His102. Substrate-binding positions include 103–104 and Arg113; that span reads IS.

This sequence belongs to the type-II 3-dehydroquinase family. Homododecamer.

The catalysed reaction is 3-dehydroquinate = 3-dehydroshikimate + H2O. The protein operates within metabolic intermediate biosynthesis; chorismate biosynthesis; chorismate from D-erythrose 4-phosphate and phosphoenolpyruvate: step 3/7. Catalyzes a trans-dehydration via an enolate intermediate. The protein is 3-dehydroquinate dehydratase of Fusobacterium nucleatum subsp. nucleatum (strain ATCC 25586 / DSM 15643 / BCRC 10681 / CIP 101130 / JCM 8532 / KCTC 2640 / LMG 13131 / VPI 4355).